Consider the following 323-residue polypeptide: Acetyl-coenzyme A carboxylase carboxyl transferase subunit alpha (323 aa).

The CoA carboxyltransferase C-terminal domain occupies 35–296; it reads EVLSELDELR…GMTLKKCLDE (262 aa).

The protein belongs to the AccA family. As to quaternary structure, acetyl-CoA carboxylase is a heterohexamer composed of biotin carboxyl carrier protein (AccB), biotin carboxylase (AccC) and two subunits each of ACCase subunit alpha (AccA) and ACCase subunit beta (AccD).

It localises to the cytoplasm. It carries out the reaction N(6)-carboxybiotinyl-L-lysyl-[protein] + acetyl-CoA = N(6)-biotinyl-L-lysyl-[protein] + malonyl-CoA. The protein operates within lipid metabolism; malonyl-CoA biosynthesis; malonyl-CoA from acetyl-CoA: step 1/1. Its function is as follows. Component of the acetyl coenzyme A carboxylase (ACC) complex. First, biotin carboxylase catalyzes the carboxylation of biotin on its carrier protein (BCCP) and then the CO(2) group is transferred by the carboxyltransferase to acetyl-CoA to form malonyl-CoA. The polypeptide is Acetyl-coenzyme A carboxylase carboxyl transferase subunit alpha (Aquifex aeolicus (strain VF5)).